Here is a 371-residue protein sequence, read N- to C-terminus: 4-hydroxy-3-methylbut-2-en-1-yl diphosphate synthase (flavodoxin) (371 aa).

Positions 269, 272, 304, and 311 each coordinate [4Fe-4S] cluster.

The protein belongs to the IspG family. It depends on [4Fe-4S] cluster as a cofactor.

It carries out the reaction (2E)-4-hydroxy-3-methylbut-2-enyl diphosphate + oxidized [flavodoxin] + H2O + 2 H(+) = 2-C-methyl-D-erythritol 2,4-cyclic diphosphate + reduced [flavodoxin]. It functions in the pathway isoprenoid biosynthesis; isopentenyl diphosphate biosynthesis via DXP pathway; isopentenyl diphosphate from 1-deoxy-D-xylulose 5-phosphate: step 5/6. In terms of biological role, converts 2C-methyl-D-erythritol 2,4-cyclodiphosphate (ME-2,4cPP) into 1-hydroxy-2-methyl-2-(E)-butenyl 4-diphosphate. The chain is 4-hydroxy-3-methylbut-2-en-1-yl diphosphate synthase (flavodoxin) from Acinetobacter baylyi (strain ATCC 33305 / BD413 / ADP1).